A 365-amino-acid polypeptide reads, in one-letter code: 3-isopropylmalate dehydrogenase (365 aa).

78–91 contacts NAD(+); sequence GYKWDSLPRSQRPE. Substrate-binding residues include Arg-98, Arg-108, Arg-136, and Asp-226. 3 residues coordinate Mg(2+): Asp-226, Asp-250, and Asp-254. 284-296 contacts NAD(+); the sequence is GSAPDIAGQDKAN.

This sequence belongs to the isocitrate and isopropylmalate dehydrogenases family. LeuB type 1 subfamily. In terms of assembly, homodimer. Mg(2+) is required as a cofactor. The cofactor is Mn(2+).

It is found in the cytoplasm. It carries out the reaction (2R,3S)-3-isopropylmalate + NAD(+) = 4-methyl-2-oxopentanoate + CO2 + NADH. Its pathway is amino-acid biosynthesis; L-leucine biosynthesis; L-leucine from 3-methyl-2-oxobutanoate: step 3/4. Its function is as follows. Catalyzes the oxidation of 3-carboxy-2-hydroxy-4-methylpentanoate (3-isopropylmalate) to 3-carboxy-4-methyl-2-oxopentanoate. The product decarboxylates to 4-methyl-2 oxopentanoate. This Synechococcus elongatus (strain ATCC 33912 / PCC 7942 / FACHB-805) (Anacystis nidulans R2) protein is 3-isopropylmalate dehydrogenase.